A 239-amino-acid polypeptide reads, in one-letter code: Sugar fermentation stimulation protein homolog (239 aa).

This sequence belongs to the SfsA family.

The chain is Sugar fermentation stimulation protein homolog from Caulobacter vibrioides (strain ATCC 19089 / CIP 103742 / CB 15) (Caulobacter crescentus).